The chain runs to 202 residues: Small ribosomal subunit protein uS4 (202 aa).

The interval 18–44 is disordered; that stretch reads LPGLTRKSARREYPPGQHGQGRRKRSE. The S4 RNA-binding domain maps to 90 to 152; the sequence is MRLDNTVFRL…DRSRKLIEAN (63 aa).

It belongs to the universal ribosomal protein uS4 family. In terms of assembly, part of the 30S ribosomal subunit. Contacts protein S5. The interaction surface between S4 and S5 is involved in control of translational fidelity.

Functionally, one of the primary rRNA binding proteins, it binds directly to 16S rRNA where it nucleates assembly of the body of the 30S subunit. In terms of biological role, with S5 and S12 plays an important role in translational accuracy. The polypeptide is Small ribosomal subunit protein uS4 (Picosynechococcus sp. (strain ATCC 27264 / PCC 7002 / PR-6) (Agmenellum quadruplicatum)).